A 164-amino-acid chain; its full sequence is Ribonuclease H (164 aa).

The 142-residue stretch at 9-150 folds into the RNase H type-1 domain; sequence DMPRVTIYTD…ADTLANAATD (142 aa). Residues D18, E56, D78, and D142 each contribute to the Mg(2+) site.

It belongs to the RNase H family. Monomer. It depends on Mg(2+) as a cofactor.

Its subcellular location is the cytoplasm. The catalysed reaction is Endonucleolytic cleavage to 5'-phosphomonoester.. Functionally, endonuclease that specifically degrades the RNA of RNA-DNA hybrids. This chain is Ribonuclease H, found in Chromohalobacter salexigens (strain ATCC BAA-138 / DSM 3043 / CIP 106854 / NCIMB 13768 / 1H11).